We begin with the raw amino-acid sequence, 196 residues long: Probable GTP-binding protein EngB (196 aa).

The EngB-type G domain maps to 22 to 195; it reads NIPEIALVGR…WQWIEERMGK (174 aa). GTP is bound by residues 30–37, 57–61, 75–78, 142–145, and 174–176; these read GRSNVGKS, GKTQT, DVPG, TKID, and FSA. 2 residues coordinate Mg(2+): Ser37 and Thr59.

It belongs to the TRAFAC class TrmE-Era-EngA-EngB-Septin-like GTPase superfamily. EngB GTPase family. The cofactor is Mg(2+).

Functionally, necessary for normal cell division and for the maintenance of normal septation. This Limosilactobacillus reuteri (strain DSM 20016) (Lactobacillus reuteri) protein is Probable GTP-binding protein EngB.